A 255-amino-acid chain; its full sequence is Leucyl/phenylalanyl-tRNA--protein transferase (255 aa).

The protein belongs to the L/F-transferase family.

Its subcellular location is the cytoplasm. The enzyme catalyses N-terminal L-lysyl-[protein] + L-leucyl-tRNA(Leu) = N-terminal L-leucyl-L-lysyl-[protein] + tRNA(Leu) + H(+). It catalyses the reaction N-terminal L-arginyl-[protein] + L-leucyl-tRNA(Leu) = N-terminal L-leucyl-L-arginyl-[protein] + tRNA(Leu) + H(+). It carries out the reaction L-phenylalanyl-tRNA(Phe) + an N-terminal L-alpha-aminoacyl-[protein] = an N-terminal L-phenylalanyl-L-alpha-aminoacyl-[protein] + tRNA(Phe). Functionally, functions in the N-end rule pathway of protein degradation where it conjugates Leu, Phe and, less efficiently, Met from aminoacyl-tRNAs to the N-termini of proteins containing an N-terminal arginine or lysine. The protein is Leucyl/phenylalanyl-tRNA--protein transferase of Burkholderia thailandensis (strain ATCC 700388 / DSM 13276 / CCUG 48851 / CIP 106301 / E264).